A 232-amino-acid polypeptide reads, in one-letter code: Ubiquinone biosynthesis O-methyltransferase (232 aa).

4 residues coordinate S-adenosyl-L-methionine: R36, G55, D76, and M120.

Belongs to the methyltransferase superfamily. UbiG/COQ3 family.

It carries out the reaction a 3-demethylubiquinol + S-adenosyl-L-methionine = a ubiquinol + S-adenosyl-L-homocysteine + H(+). It catalyses the reaction a 3-(all-trans-polyprenyl)benzene-1,2-diol + S-adenosyl-L-methionine = a 2-methoxy-6-(all-trans-polyprenyl)phenol + S-adenosyl-L-homocysteine + H(+). Its pathway is cofactor biosynthesis; ubiquinone biosynthesis. Its function is as follows. O-methyltransferase that catalyzes the 2 O-methylation steps in the ubiquinone biosynthetic pathway. In Paraburkholderia phytofirmans (strain DSM 17436 / LMG 22146 / PsJN) (Burkholderia phytofirmans), this protein is Ubiquinone biosynthesis O-methyltransferase.